A 158-amino-acid chain; its full sequence is Anaerobic ribonucleoside-triphosphate reductase-activating protein (158 aa).

[4Fe-4S] cluster is bound by residues cysteine 26, cysteine 30, and cysteine 33. S-adenosyl-L-methionine contacts are provided by residues 32–34 (GCY) and glycine 74.

It belongs to the organic radical-activating enzymes family. In terms of assembly, forms a tetramer composed of two NrdD and two NrdG subunits. [4Fe-4S] cluster serves as cofactor.

The protein localises to the cytoplasm. The catalysed reaction is glycyl-[protein] + reduced [flavodoxin] + S-adenosyl-L-methionine = glycin-2-yl radical-[protein] + semiquinone [flavodoxin] + 5'-deoxyadenosine + L-methionine + H(+). Its function is as follows. Activation of anaerobic ribonucleoside-triphosphate reductase under anaerobic conditions by generation of an organic free radical, using S-adenosylmethionine and reduced flavodoxin as cosubstrates to produce 5'-deoxy-adenosine. The protein is Anaerobic ribonucleoside-triphosphate reductase-activating protein (nrdG) of Pasteurella multocida (strain Pm70).